The primary structure comprises 789 residues: Probable phosphoketolase 1 (789 aa).

This sequence belongs to the XFP family. Requires thiamine diphosphate as cofactor.

The sequence is that of Probable phosphoketolase 1 from Rhizobium meliloti (strain 1021) (Ensifer meliloti).